The following is a 509-amino-acid chain: Coiled-coil domain-containing protein 181 (509 aa).

Basic and acidic residues predominate over residues 46–82 (ENINQDLKENETVMEHTKRHSDPDKSLQDEVSPRRND). Disordered regions lie at residues 46-120 (ENIN…EEED) and 241-367 (PINN…EEKE). Polar residues-rich tracts occupy residues 243–266 (NNAN…SVSG) and 300–334 (TCPS…STYC). Residues 335 to 375 (LSPRQKELQKQLEEKREKLKREEERRKIEEEKEKKRENDIV) are a coiled coil. Basic and acidic residues predominate over residues 338–367 (RQKELQKQLEEKREKLKREEERRKIEEEKE).

This sequence belongs to the CCDC181 family. Homodimer. Interacts with HOOK1. Interacts with HOOK2. Interacts with HOOK3.

Its subcellular location is the cytoplasm. It is found in the cytoskeleton. It localises to the cell projection. The protein localises to the cilium. The protein resides in the flagellum. Microtubule-binding protein that localizes to the microtubular manchette of elongating spermatids. The chain is Coiled-coil domain-containing protein 181 from Homo sapiens (Human).